We begin with the raw amino-acid sequence, 366 residues long: Pectinesterase A (366 aa).

The N-terminal stretch at 1–24 is a signal peptide; the sequence is MLKTISGTLALSLIIAASVHQAQA. Substrate-binding residues include Thr109 and Gln153. The active-site Proton donor is Asp178. Cys192 and Cys212 are disulfide-bonded. Asp199 acts as the Nucleophile in catalysis. Arg219, Asn226, Tyr230, Arg267, Trp269, and Thr272 together coordinate substrate.

It belongs to the pectinesterase family. As to quaternary structure, monomer.

The protein localises to the secreted. The enzyme catalyses [(1-&gt;4)-alpha-D-galacturonosyl methyl ester](n) + n H2O = [(1-&gt;4)-alpha-D-galacturonosyl](n) + n methanol + n H(+). It participates in glycan metabolism; pectin degradation; 2-dehydro-3-deoxy-D-gluconate from pectin: step 1/5. Involved in maceration and soft-rotting of plant tissue. The sequence is that of Pectinesterase A (pemA) from Dickeya chrysanthemi (Pectobacterium chrysanthemi).